Reading from the N-terminus, the 434-residue chain is Septin-6 (434 aa).

N-acetylalanine is present on alanine 2. Serine 27 bears the Phosphoserine mark. The 267-residue stretch at 39–305 folds into the Septin-type G domain; sequence QGFCFNILCV…ELYRRCKLEE (267 aa). Residues 49-56 are G1 motif; that stretch reads GETGLGKS. Residues 49-56, glycine 104, 185-193, glycine 239, and arginine 254 contribute to the GTP site; these read GETGLGKS and KSDAISKSE. The segment at 101–104 is G3 motif; it reads STVG. The segment at 184 to 187 is G4 motif; it reads AKSD. Positions 321-407 form a coiled coil; the sequence is QETYEAKRNE…QRKAAAELLQ (87 aa). Lysine 367 is modified (N6-acetyllysine). Positions 403-434 are disordered; that stretch reads AELLQSQGSQAGGSQTLKRDKEKKNNPWLCIE. A compositionally biased stretch (low complexity) spans 407 to 417; the sequence is QSQGSQAGGSQ. A Phosphoserine modification is found at serine 416. Residue threonine 418 is modified to Phosphothreonine.

It belongs to the TRAFAC class TrmE-Era-EngA-EngB-Septin-like GTPase superfamily. Septin GTPase family. Septins polymerize into heterooligomeric protein complexes that form filaments, and associate with cellular membranes, actin filaments and microtubules. GTPase activity is required for filament formation. Filaments are assembled from asymmetrical heterotrimers, composed of SEPTIN2, SEPTIN6 and SEPTIN7 that associate head-to-head to form a hexameric unit. Within the trimer, directly interacts with SEPTIN2 and SEPTIN7. Also interacts with SEPTIN9 and SEPTIN12. Interaction with SEPTIN12 alters filament structure. Component of a septin core octameric complex consisting of SEPTIN12, SEPTIN7, SEPTIN6 and SEPTIN2 or SEPTIN4 in the order 12-7-6-2-2-6-7-12 or 12-7-6-4-4-6-7-12 and located in the sperm annulus. Interacts with SOCS7. Interacts with HNRNPA1. In terms of tissue distribution, expressed in the cerebral cortex (at protein level). Associated with synaptic vesicles in various brain regions, including glomeruli of the olfactory bulb (at protein level).

It is found in the cytoplasm. Its subcellular location is the cytoskeleton. The protein localises to the spindle. It localises to the chromosome. The protein resides in the centromere. It is found in the kinetochore. Its subcellular location is the cleavage furrow. The protein localises to the midbody. It localises to the cell projection. The protein resides in the cilium. It is found in the flagellum. Its function is as follows. Filament-forming cytoskeletal GTPase. Required for normal organization of the actin cytoskeleton. Involved in cytokinesis. Forms a filamentous structure with SEPTIN12, SEPTIN6, SEPTIN2 and probably SEPTIN4 at the sperm annulus which is required for the structural integrity and motility of the sperm tail during postmeiotic differentiation. The protein is Septin-6 of Mus musculus (Mouse).